A 339-amino-acid polypeptide reads, in one-letter code: Pleckstrin homology domain protein opy1 (339 aa).

The PH 1 domain occupies 25 to 119 (RVLKSGWLIK…WVHVLRSTTG (95 aa)). Polar residues predominate over residues 141-167 (ESEPNVQISDTDFDNISTEPRNQTTSP). Positions 141-170 (ESEPNVQISDTDFDNISTEPRNQTTSPLDL) are disordered. One can recognise a PH 2 domain in the interval 233–330 (KVLMQGTIHW…WVAALKTSID (98 aa)).

As to quaternary structure, interacts (via domain PH 1) with phosphatidylinositol 4-phosphate 5-kinase its3; the interaction is direct but opy1 does not appear to regulate its3 localization or function.

It localises to the cell tip. The protein resides in the cell membrane. In terms of biological role, binds phosphatidylinositol 4,5-bisphosphate (PtdIns(4,5)P2/PIP2) at the cell membrane. This chain is Pleckstrin homology domain protein opy1, found in Schizosaccharomyces pombe (strain 972 / ATCC 24843) (Fission yeast).